The following is a 194-amino-acid chain: Imidazoleglycerol-phosphate dehydratase (194 aa).

Belongs to the imidazoleglycerol-phosphate dehydratase family.

It is found in the cytoplasm. It catalyses the reaction D-erythro-1-(imidazol-4-yl)glycerol 3-phosphate = 3-(imidazol-4-yl)-2-oxopropyl phosphate + H2O. It participates in amino-acid biosynthesis; L-histidine biosynthesis; L-histidine from 5-phospho-alpha-D-ribose 1-diphosphate: step 6/9. The sequence is that of Imidazoleglycerol-phosphate dehydratase from Sulfurisphaera tokodaii (strain DSM 16993 / JCM 10545 / NBRC 100140 / 7) (Sulfolobus tokodaii).